The sequence spans 104 residues: MKFRPLHDRVVVKRIDAEEKTAGGIIIPDTAKEKPSQGEVIAVGPGGHDDSGKLIPIDIEVGDRVLFGKWSGTEVKIDGQDLLIMKESDVMGVLTDVFSKKKAA.

Belongs to the GroES chaperonin family. As to quaternary structure, heptamer of 7 subunits arranged in a ring. Interacts with the chaperonin GroEL.

The protein localises to the cytoplasm. Functionally, together with the chaperonin GroEL, plays an essential role in assisting protein folding. The GroEL-GroES system forms a nano-cage that allows encapsulation of the non-native substrate proteins and provides a physical environment optimized to promote and accelerate protein folding. GroES binds to the apical surface of the GroEL ring, thereby capping the opening of the GroEL channel. The protein is Co-chaperonin GroES 3 of Bradyrhizobium diazoefficiens (strain JCM 10833 / BCRC 13528 / IAM 13628 / NBRC 14792 / USDA 110).